A 389-amino-acid polypeptide reads, in one-letter code: Mitochondrial tRNA-specific 2-thiouridylase 1 (389 aa).

ATP is bound by residues 8–15 (GVSGGVDS) and Met34. The interval 94-96 (NPD) is interaction with target base in tRNA. Cys99 functions as the Nucleophile in the catalytic mechanism. Cys99 and Cys205 are disulfide-bonded. An ATP-binding site is contributed by Gly124. The interaction with tRNA stretch occupies residues 154–156 (KDQ). The active-site Cysteine persulfide intermediate is Cys205. The interaction with tRNA stretch occupies residues 317–318 (QH).

This sequence belongs to the MnmA/TRMU family.

It localises to the mitochondrion. The enzyme catalyses 5-taurinomethyluridine(34) in tRNA + S-sulfanyl-L-cysteinyl-[protein] + AH2 + ATP = 5-taurinomethyl-2-thiouridine(34) in tRNA + L-cysteinyl-[protein] + A + AMP + diphosphate + H(+). Functionally, catalyzes the 2-thiolation of uridine at the wobble position (U34) of mitochondrial tRNA(Lys), tRNA(Glu) and tRNA(Gln). Required for the formation of 5-taurinomethyl-2-thiouridine (tm5s2U) of mitochondrial tRNA(Lys), tRNA(Glu), and tRNA(Gln) at the wobble position. ATP is required to activate the C2 atom of the wobble base. This is Mitochondrial tRNA-specific 2-thiouridylase 1 from Drosophila melanogaster (Fruit fly).